The following is a 356-amino-acid chain: UDP-N-acetylglucosamine--N-acetylmuramyl-(pentapeptide) pyrophosphoryl-undecaprenol N-acetylglucosamine transferase (356 aa).

UDP-N-acetyl-alpha-D-glucosamine contacts are provided by residues 12–14 (TGG), N124, R163, S188, I242, 261–266 (ALTVSE), and Q287.

This sequence belongs to the glycosyltransferase 28 family. MurG subfamily.

The protein localises to the cell inner membrane. It catalyses the reaction di-trans,octa-cis-undecaprenyl diphospho-N-acetyl-alpha-D-muramoyl-L-alanyl-D-glutamyl-meso-2,6-diaminopimeloyl-D-alanyl-D-alanine + UDP-N-acetyl-alpha-D-glucosamine = di-trans,octa-cis-undecaprenyl diphospho-[N-acetyl-alpha-D-glucosaminyl-(1-&gt;4)]-N-acetyl-alpha-D-muramoyl-L-alanyl-D-glutamyl-meso-2,6-diaminopimeloyl-D-alanyl-D-alanine + UDP + H(+). It functions in the pathway cell wall biogenesis; peptidoglycan biosynthesis. In terms of biological role, cell wall formation. Catalyzes the transfer of a GlcNAc subunit on undecaprenyl-pyrophosphoryl-MurNAc-pentapeptide (lipid intermediate I) to form undecaprenyl-pyrophosphoryl-MurNAc-(pentapeptide)GlcNAc (lipid intermediate II). This Pseudomonas fluorescens (strain SBW25) protein is UDP-N-acetylglucosamine--N-acetylmuramyl-(pentapeptide) pyrophosphoryl-undecaprenol N-acetylglucosamine transferase.